The sequence spans 432 residues: Enolase (432 aa).

A (2R)-2-phosphoglycerate-binding site is contributed by glutamine 166. Residue glutamate 210 is the Proton donor of the active site. The Mg(2+) site is built by aspartate 247, glutamate 288, and aspartate 315. Lysine 340, arginine 369, serine 370, and lysine 391 together coordinate (2R)-2-phosphoglycerate. The active-site Proton acceptor is lysine 340.

It belongs to the enolase family. Requires Mg(2+) as cofactor.

The protein localises to the cytoplasm. The protein resides in the secreted. It is found in the cell surface. It catalyses the reaction (2R)-2-phosphoglycerate = phosphoenolpyruvate + H2O. Its pathway is carbohydrate degradation; glycolysis; pyruvate from D-glyceraldehyde 3-phosphate: step 4/5. Its function is as follows. Catalyzes the reversible conversion of 2-phosphoglycerate (2-PG) into phosphoenolpyruvate (PEP). It is essential for the degradation of carbohydrates via glycolysis. This Aeropyrum pernix (strain ATCC 700893 / DSM 11879 / JCM 9820 / NBRC 100138 / K1) protein is Enolase.